We begin with the raw amino-acid sequence, 1131 residues long: Topless-related protein 2 (1131 aa).

Residues 4–36 (LSRELVFLILQFLDEEKFKESVHKLEQESGFFF) form the LisH domain. The CTLH domain occupies 34–92 (FFFNIKYFEEKALAGEWDEVEKYLSGFTKVDDNRYSMKIFFEIRKQKYLEALDRNDRAK). The residue at position 214 (threonine 214) is a Phosphothreonine. 12 WD repeats span residues 345-385 (RQGS…KVVT), 407-446 (EPSI…LRQH), 451-493 (AHVG…FTFE), 495-535 (HEAP…SRVD), 585-624 (FRKK…LLTV), 629-668 (GGLP…RTLR), 763-802 (DSVS…QNPT), 829-867 (NPEG…VMTT), 870-910 (PPPP…VKTK), 913-952 (GHQK…KKKS), 959-999 (PGKA…CIHK), and 1005-1044 (ALSS…LRCR). The segment at 1099–1131 (VGVAAGSDKAGTENGRPSSSSAANNSSSDQIQR) is disordered. Positions 1116–1131 (SSSSAANNSSSDQIQR) are enriched in low complexity.

Tetramer. Interacts with NINJA/AFPH2. Interacts with SMXL6, SMXL7 and SMXL8. Interacts with SPL (via EAR motif). Interacts with SPEAR3/TIE1.

Its subcellular location is the nucleus. Its function is as follows. Transcriptional corepressor. Negative regulator of jasmonate responses. The polypeptide is Topless-related protein 2 (TPR2) (Arabidopsis thaliana (Mouse-ear cress)).